A 447-amino-acid chain; its full sequence is Beclin-1 (447 aa).

A BH3 motif is present at residues 105-124; it reads TMENLSRRLKVTSNLFDIMS. The interaction with BCL2 and BCL2L1 isoform Bcl-X(L) stretch occupies residues 109–156; it reads LSRRLKVTSNLFDIMSGQTDIDHPLCEECTDTLLDHLDTQLNITENEC. Residues 140-214 are a coiled coil; sequence TLLDHLDTQL…VAKELDEGRN (75 aa). An evolutionary conserved domain (ECD) region spans residues 242-447; the sequence is DDLKSVDNQM…AWVSSQFYNR (206 aa). A Glycyl lysine isopeptide (Lys-Gly) (interchain with G-Cter in ubiquitin) cross-link involves residue lysine 399. Residues 422–447 are required for membrane-association; the sequence is WTKALKFMLTNLKWGLAWVSSQFYNR.

This sequence belongs to the beclin family. In terms of assembly, component of the PI3K (PI3KC3/PI3K-III/class III phosphatidylinositol 3-kinase) complex. Interacts with the poly-Gln domain of ATXN3; the interaction causes deubiquitination at Lys-399 and stabilizes BECN1. Polyubiquitinated at Lys-399 with 'Lys-48'-linkages. 'Lys-48'-linked polyubiquitination of Lys-399 leads to degradation. Deubiquitinated by ATXN3, leading to stabilization.

It is found in the cytoplasm. It localises to the golgi apparatus. Its subcellular location is the trans-Golgi network membrane. The protein resides in the endosome membrane. The protein localises to the endoplasmic reticulum membrane. It is found in the mitochondrion membrane. It localises to the endosome. Its subcellular location is the cytoplasmic vesicle. The protein resides in the autophagosome. Functionally, plays a central role in autophagy. Acts as a core subunit of different PI3K complex forms that mediate formation of phosphatidylinositol 3-phosphate and are believed to play a role in multiple membrane trafficking pathways: PI3KC3-C1 is involved in initiation of autophagosomes and PI3KC3-C2 in maturation of autophagosomes and endocytosis. Involved in regulation of degradative endocytic trafficking and required for the abscission step in cytokinesis, probably in the context of PI3KC3-C2. Essential for the formation of PI3KC3-C2 but not PI3KC3-C1 PI3K complex forms. Involved in endocytosis including endosome formation in neuronal cells. In Danio rerio (Zebrafish), this protein is Beclin-1 (becn1).